Reading from the N-terminus, the 340-residue chain is Deubiquitinase SseL (340 aa).

H223 is an active-site residue. C285 serves as the catalytic Nucleophile.

It belongs to the peptidase C79 family.

The protein resides in the secreted. Its subcellular location is the host cytoplasm. Its function is as follows. Effector proteins function to alter host cell physiology and promote bacterial survival in host tissues. This protease targets the host cell ubiquitin pathway by acting as a deubiquitinase in infected host cells. This chain is Deubiquitinase SseL (sseL), found in Salmonella choleraesuis (strain SC-B67).